A 237-amino-acid polypeptide reads, in one-letter code: Endonuclease NucS (237 aa).

The protein belongs to the NucS endonuclease family.

It is found in the cytoplasm. Its function is as follows. Cleaves both 3' and 5' ssDNA extremities of branched DNA structures. In Saccharolobus islandicus (strain L.S.2.15 / Lassen #1) (Sulfolobus islandicus), this protein is Endonuclease NucS.